Here is a 310-residue protein sequence, read N- to C-terminus: tRNA dimethylallyltransferase (310 aa).

Gly-13–Thr-20 is a binding site for ATP. Thr-15–Thr-20 lines the substrate pocket. Interaction with substrate tRNA stretches follow at residues Asp-38–Leu-41, Gln-162–Arg-166, Arg-243–Arg-248, and Lys-276–Arg-283.

The protein belongs to the IPP transferase family. Monomer. It depends on Mg(2+) as a cofactor.

It carries out the reaction adenosine(37) in tRNA + dimethylallyl diphosphate = N(6)-dimethylallyladenosine(37) in tRNA + diphosphate. Its function is as follows. Catalyzes the transfer of a dimethylallyl group onto the adenine at position 37 in tRNAs that read codons beginning with uridine, leading to the formation of N6-(dimethylallyl)adenosine (i(6)A). The chain is tRNA dimethylallyltransferase from Aliivibrio fischeri (strain MJ11) (Vibrio fischeri).